The chain runs to 249 residues: Acetylglutamate kinase (249 aa).

Residues 38–39 (GG), arginine 60, and asparagine 147 each bind substrate.

It belongs to the acetylglutamate kinase family. ArgB subfamily.

The protein localises to the cytoplasm. It catalyses the reaction N-acetyl-L-glutamate + ATP = N-acetyl-L-glutamyl 5-phosphate + ADP. Its pathway is amino-acid biosynthesis; L-arginine biosynthesis; N(2)-acetyl-L-ornithine from L-glutamate: step 2/4. Its function is as follows. Catalyzes the ATP-dependent phosphorylation of N-acetyl-L-glutamate. This Deinococcus radiodurans (strain ATCC 13939 / DSM 20539 / JCM 16871 / CCUG 27074 / LMG 4051 / NBRC 15346 / NCIMB 9279 / VKM B-1422 / R1) protein is Acetylglutamate kinase.